A 492-amino-acid polypeptide reads, in one-letter code: Malonate-semialdehyde dehydrogenase (492 aa).

Phenylalanine 156, lysine 180, glutamate 183, lysine 184, serine 233, and threonine 255 together coordinate NAD(+). The active-site Nucleophile is cysteine 288. Glutamate 387 lines the NAD(+) pocket.

The protein belongs to the aldehyde dehydrogenase family. IolA subfamily. As to quaternary structure, homotetramer.

It carries out the reaction 3-oxopropanoate + NAD(+) + CoA + H2O = hydrogencarbonate + acetyl-CoA + NADH + H(+). The enzyme catalyses 2-methyl-3-oxopropanoate + NAD(+) + CoA + H2O = propanoyl-CoA + hydrogencarbonate + NADH + H(+). It functions in the pathway polyol metabolism; myo-inositol degradation into acetyl-CoA; acetyl-CoA from myo-inositol: step 7/7. In terms of biological role, catalyzes the oxidation of malonate semialdehyde (MSA) and methylmalonate semialdehyde (MMSA) into acetyl-CoA and propanoyl-CoA, respectively. Is involved in a myo-inositol catabolic pathway. Bicarbonate, and not CO2, is the end-product of the enzymatic reaction. This chain is Malonate-semialdehyde dehydrogenase, found in Lacticaseibacillus casei (Lactobacillus casei).